We begin with the raw amino-acid sequence, 264 residues long: 2-hydroxyhexa-2,4-dienoate hydratase (264 aa).

It belongs to the hydratase/decarboxylase family.

It carries out the reaction (2Z,4Z)-2-hydroxyhexa-2,4-dienoate + H2O = 4-hydroxy-2-oxohexanoate. Involved in the catatabolism of testosterone. Catalyzes the hydration of 2-hydroxyhexa-2,4-dienoic acid to 4-hydroxy-2-oxohexanoic acid. The chain is 2-hydroxyhexa-2,4-dienoate hydratase (tesE) from Comamonas testosteroni (Pseudomonas testosteroni).